We begin with the raw amino-acid sequence, 519 residues long: 2-isopropylmalate synthase (519 aa).

Residues 12 to 274 enclose the Pyruvate carboxyltransferase domain; it reads VVIFDTTLRD…WCNVESTMLT (263 aa). Residues Asp21, His209, His211, and Asn245 each contribute to the Mn(2+) site. The regulatory domain stretch occupies residues 398 to 519; it reads KLSSLTVIAG…QRDVPAAAAS (122 aa).

Belongs to the alpha-IPM synthase/homocitrate synthase family. LeuA type 1 subfamily. Homodimer. Mn(2+) serves as cofactor.

It is found in the cytoplasm. It catalyses the reaction 3-methyl-2-oxobutanoate + acetyl-CoA + H2O = (2S)-2-isopropylmalate + CoA + H(+). The protein operates within amino-acid biosynthesis; L-leucine biosynthesis; L-leucine from 3-methyl-2-oxobutanoate: step 1/4. In terms of biological role, catalyzes the condensation of the acetyl group of acetyl-CoA with 3-methyl-2-oxobutanoate (2-ketoisovalerate) to form 3-carboxy-3-hydroxy-4-methylpentanoate (2-isopropylmalate). The chain is 2-isopropylmalate synthase from Nitrobacter winogradskyi (strain ATCC 25391 / DSM 10237 / CIP 104748 / NCIMB 11846 / Nb-255).